The primary structure comprises 248 residues: 2,3-bisphosphoglycerate-dependent phosphoglycerate mutase 2 (248 aa).

Residues Arg-8–Asn-15, Thr-21–Gly-22, Arg-60, Glu-87–Tyr-90, Lys-98, Arg-114–Arg-115, and Gly-183–Asn-184 each bind substrate. The active-site Tele-phosphohistidine intermediate is His-9. Glu-87 functions as the Proton donor/acceptor in the catalytic mechanism.

It belongs to the phosphoglycerate mutase family. BPG-dependent PGAM subfamily.

The catalysed reaction is (2R)-2-phosphoglycerate = (2R)-3-phosphoglycerate. It functions in the pathway carbohydrate degradation; glycolysis; pyruvate from D-glyceraldehyde 3-phosphate: step 3/5. Its function is as follows. Catalyzes the interconversion of 2-phosphoglycerate and 3-phosphoglycerate. The sequence is that of 2,3-bisphosphoglycerate-dependent phosphoglycerate mutase 2 from Bacteroides thetaiotaomicron (strain ATCC 29148 / DSM 2079 / JCM 5827 / CCUG 10774 / NCTC 10582 / VPI-5482 / E50).